Consider the following 170-residue polypeptide: ATP synthase subunit b (170 aa).

Residues 3-23 form a helical membrane-spanning segment; it reads IKILFFLALPFLAYASEHGGT.

Belongs to the ATPase B chain family. As to quaternary structure, F-type ATPases have 2 components, F(1) - the catalytic core - and F(0) - the membrane proton channel. F(1) has five subunits: alpha(3), beta(3), gamma(1), delta(1), epsilon(1). F(0) has three main subunits: a(1), b(2) and c(10-14). The alpha and beta chains form an alternating ring which encloses part of the gamma chain. F(1) is attached to F(0) by a central stalk formed by the gamma and epsilon chains, while a peripheral stalk is formed by the delta and b chains.

It is found in the cell inner membrane. Its function is as follows. F(1)F(0) ATP synthase produces ATP from ADP in the presence of a proton or sodium gradient. F-type ATPases consist of two structural domains, F(1) containing the extramembraneous catalytic core and F(0) containing the membrane proton channel, linked together by a central stalk and a peripheral stalk. During catalysis, ATP synthesis in the catalytic domain of F(1) is coupled via a rotary mechanism of the central stalk subunits to proton translocation. Component of the F(0) channel, it forms part of the peripheral stalk, linking F(1) to F(0). This is ATP synthase subunit b from Campylobacter concisus (strain 13826).